Here is a 34-residue protein sequence, read N- to C-terminus: Sarcoplasmic/endoplasmic reticulum calcium ATPase regulator DWORF (34 aa).

The helical transmembrane segment at 12–32 (IVPILLLVGWIVGCIIVIYIV) threads the bilayer.

Homooligomer. Can also form heterooligomers with other sarcoplasmic/endoplasmic reticulum calcium ATPase (SERCA) regulators ARLN, ERLN, PLN and SLN. Monomer. Interacts with ATP2A1/SERCA1; the interaction results in activation of ATP2A1. Interacts as a monomer with ATP2A2/SERCA2; the interaction results in activation of ATP2A2. Highly expressed in heart (at protein level). Detected in heart and soleus, a postural muscle group of the hindlimb containing the highest enrichment of slow-twitch muscle fibers. Also expressed in diaphragm, which contains some slow-twitch fibers. Not detected in the quadriceps, a fast-twitch muscle group, or in cardiac atrial muscle. Not expressed in the prenatal heart but gradually increases in abundance postnatally.

The protein resides in the sarcoplasmic reticulum membrane. Functionally, enhances the activity of ATP2A1/SERCA1 ATPase in sarcoplasmic reticulum by displacing ATP2A1/SERCA1 inhibitors, thereby acting as a key regulator of skeletal muscle activity. Also enhances the activity of the ATP2A2/SERCA2 ATPase. Does not directly stimulate SERCA pump activity. Binds preferentially to the phosphorylated E1 and E2 conformational forms of ATP2A2 which predominate at high Ca(2+) concentrations during the systolic phase of the cardiac cycle. Competes with ATP2A2 inhibitor phospholamban (PLN) for binding to ATP2A2 and displaces PLN. Can activate ATP2A2 directly in the absence of PLN. Also enhances sarcoplasmic reticulum Ca(2+) uptake and myocyte contractility by displacing the SERCA inhibitory peptides sarcolipin (SLN) and myoregulin (MRLN). The chain is Sarcoplasmic/endoplasmic reticulum calcium ATPase regulator DWORF from Mus musculus (Mouse).